Here is a 597-residue protein sequence, read N- to C-terminus: MKKLINLISEEVTKAFVSAGYDEKYGKVTLSNRPDLCEFQCNGAMAAAKEYKCAPFMISDKVAALLESDEMFESVESVKPGFLNIKMDTAFLAKYMNDMKDDEGRYGLEKAKKPLTIVVDYGGPNVAKPLHVGHLRSAVIGESVKRIAKFMGHNVIGDVHLGDWGLQMGLIITELRERKPDLVYFDESYTGEYPKEAPFTISELEDIYPTASGKSKSDESFKEAALLATKELQGGRRGYQALLSHIMNVSVTDLKRNYENLNVHFELWKGESDAQPYVPGMVEMMKEKGFAHMSEGALVVDVKEDTDTKEIPPCIILKSDGASLYSTTDLATLVMRMKENNPDRVIYLADARQSMHFIQVFRCARKTGIVPDTTELVHIGFGTMNGKDGKPFKTRDGGVMRLEYLLKEIDDEMLNKIKENQKEKENLNIDEAEAEQTAKTVALAAVKYGDLSNQASKDYIFDIDRFTSFEGNTGPYILYTIVRIKSILSKYEAKGGDISALKDAIMPAVNAGQKNLMLSLAKFNATIESAYEESAPHKICAYIYELANAFNGFYHDTKILSEENEELKKSYISLLVLTKEILEACIDMLGFSAPDRM.

The 'HIGH' region motif lies at 124–134; that stretch reads PNVAKPLHVGH.

Belongs to the class-I aminoacyl-tRNA synthetase family. In terms of assembly, monomer.

It localises to the cytoplasm. The enzyme catalyses tRNA(Arg) + L-arginine + ATP = L-arginyl-tRNA(Arg) + AMP + diphosphate. The sequence is that of Arginine--tRNA ligase from Agathobacter rectalis (strain ATCC 33656 / DSM 3377 / JCM 17463 / KCTC 5835 / VPI 0990) (Eubacterium rectale).